The primary structure comprises 396 residues: Elongation factor Tu 1 (396 aa).

One can recognise a tr-type G domain in the interval 10–206 (KLHVNVGTIG…ALDTFIPDPT (197 aa)). The segment at 19-26 (GHVDHGKT) is G1. 19-26 (GHVDHGKT) contributes to the GTP binding site. Mg(2+) is bound at residue Thr26. Residues 60-64 (GITIS) are G2. Residues 81–84 (DCPG) are G3. GTP-binding positions include 81–85 (DCPGH) and 136–139 (NKAD). A G4 region spans residues 136–139 (NKAD). A G5 region spans residues 174-176 (SAR).

Belongs to the TRAFAC class translation factor GTPase superfamily. Classic translation factor GTPase family. EF-Tu/EF-1A subfamily. As to quaternary structure, monomer.

Its subcellular location is the cytoplasm. It carries out the reaction GTP + H2O = GDP + phosphate + H(+). In terms of biological role, GTP hydrolase that promotes the GTP-dependent binding of aminoacyl-tRNA to the A-site of ribosomes during protein biosynthesis. The chain is Elongation factor Tu 1 from Xanthomonas campestris pv. campestris (strain B100).